Here is a 68-residue protein sequence, read N- to C-terminus: uncharacterized protein (68 aa).

This is an uncharacterized protein from Dictyostelium discoideum (Social amoeba).